Reading from the N-terminus, the 149-residue chain is Large ribosomal subunit protein bL9 (149 aa).

This sequence belongs to the bacterial ribosomal protein bL9 family.

In terms of biological role, binds to the 23S rRNA. The chain is Large ribosomal subunit protein bL9 from Enterobacter sp. (strain 638).